Here is a 62-residue protein sequence, read N- to C-terminus: uncharacterized protein (62 aa).

2 consecutive 4Fe-4S ferredoxin-type domains span residues 2–31 and 32–62; these read AVTIDYSLCKGAECAECVNNCPMEVFEIEG and DKVVVARPDDCTYCGVCEDVCPTGAVKVEPE. Residues C10, C15, C18, C22, C42, C45, C48, and C52 each contribute to the [4Fe-4S] cluster site.

The cofactor is [4Fe-4S] cluster.

This is an uncharacterized protein from Methanocaldococcus jannaschii (strain ATCC 43067 / DSM 2661 / JAL-1 / JCM 10045 / NBRC 100440) (Methanococcus jannaschii).